A 147-amino-acid polypeptide reads, in one-letter code: Ribonuclease 4 (147 aa).

Positions 1 to 28 (MALQRTQAFLLLLLLTLLGLGLVQPSYG) are cleaved as a signal peptide. At Gln-29 the chain carries Pyrrolidone carboxylic acid. Residues Arg-35, His-40, Lys-68, Asn-71, and Thr-72 each coordinate dUMP. The active-site Proton acceptor is the His-40. Cystine bridges form between Cys-53–Cys-109, Cys-67–Cys-120, Cys-85–Cys-135, and Cys-92–Cys-99. His-144 serves as the catalytic Proton donor. Residue Phe-145 coordinates dUMP.

This sequence belongs to the pancreatic ribonuclease family.

It localises to the secreted. Its function is as follows. Cleaves preferentially after uridine bases. Has antimicrobial activity against uropathogenic E.coli (UPEC). Probably contributes to urinary tract sterility. The chain is Ribonuclease 4 (RNASE4) from Bos taurus (Bovine).